The chain runs to 347 residues: uncharacterized protein (347 aa).

This is an uncharacterized protein from Invertebrate iridescent virus 3 (IIV-3).